A 396-amino-acid polypeptide reads, in one-letter code: 1-deoxy-D-xylulose 5-phosphate reductoisomerase (396 aa).

NADPH contacts are provided by Thr-13, Gly-14, Ser-15, Ile-16, and Asn-127. Residue Lys-128 coordinates 1-deoxy-D-xylulose 5-phosphate. Glu-129 lines the NADPH pocket. Asp-153 contributes to the Mn(2+) binding site. Residues Ser-154, Glu-155, Ser-184, and His-207 each contribute to the 1-deoxy-D-xylulose 5-phosphate site. Residue Glu-155 coordinates Mn(2+). Residue Gly-213 coordinates NADPH. 4 residues coordinate 1-deoxy-D-xylulose 5-phosphate: Ser-220, Asn-225, Lys-226, and Glu-229. Glu-229 provides a ligand contact to Mn(2+).

This sequence belongs to the DXR family. Mg(2+) serves as cofactor. The cofactor is Mn(2+).

It catalyses the reaction 2-C-methyl-D-erythritol 4-phosphate + NADP(+) = 1-deoxy-D-xylulose 5-phosphate + NADPH + H(+). Its pathway is isoprenoid biosynthesis; isopentenyl diphosphate biosynthesis via DXP pathway; isopentenyl diphosphate from 1-deoxy-D-xylulose 5-phosphate: step 1/6. Catalyzes the NADPH-dependent rearrangement and reduction of 1-deoxy-D-xylulose-5-phosphate (DXP) to 2-C-methyl-D-erythritol 4-phosphate (MEP). This Pseudomonas aeruginosa (strain UCBPP-PA14) protein is 1-deoxy-D-xylulose 5-phosphate reductoisomerase.